The chain runs to 402 residues: 26S proteasome non-ATPase regulatory subunit 4 homolog (402 aa).

The VWFA domain maps to 5 to 189 (ATMICIDNSE…LSDVLISTPI (185 aa)). The 20-residue stretch at 221 to 240 (NVDPELALALRLSMEEERAR) folds into the UIM 1 domain. Residues 241-261 (QEAIAKKAAEESSGAENKDHA) show a composition bias toward basic and acidic residues. Disordered stretches follow at residues 241-292 (QEAI…EDDD) and 302-321 (MSME…MAEA). 2 consecutive UIM domains span residues 291-310 (DDAQ…GSSG) and 323-342 (VDDQ…AGGS). Positions 363 to 402 (SLPGVDPNDPSVKDLLASLHGQGEQEKKEDKSDKPEDEKK) are disordered. Over residues 385-402 (GEQEKKEDKSDKPEDEKK) the composition is skewed to basic and acidic residues.

It belongs to the proteasome subunit S5A family. Component of the 19S regulatory particle (RP/PA700) base subcomplex of the 26S proteasome. The 26S proteasome is composed of a core protease (CP), known as the 20S proteasome, capped at one or both ends by the 19S regulatory particle (RP/PA700). The RP/PA700 complex is composed of at least 17 different subunits in two subcomplexes, the base and the lid, which form the portions proximal and distal to the 20S proteolytic core, respectively. Interacts with PI4KG4.

In terms of biological role, plays a role in maintaining the structural integrity of the 19S regulatory particle (RP), subcomplex of the 26S proteasome. Plays a major role in both the direct and indirect recognition of ubiquitinated substrates of ubiquitin/26S proteasome-mediated proteolysis (UPP). Binds and presumably selects ubiquitin-conjugates for destruction. The chain is 26S proteasome non-ATPase regulatory subunit 4 homolog from Oryza sativa subsp. japonica (Rice).